A 353-amino-acid polypeptide reads, in one-letter code: Photosystem II D2 protein (353 aa).

Threonine 2 carries the post-translational modification N-acetylthreonine. Threonine 2 is modified (phosphothreonine). A helical membrane pass occupies residues 41-61 (CAYFALGGWFTGTTFVTSWYT). Histidine 118 contacts chlorophyll a. The chain crosses the membrane as a helical span at residues 125-141 (GFMLRQFELARSVQLRP). The pheophytin a site is built by glutamine 130 and asparagine 143. Residues 153-166 (VFVSVFLIYPLGQS) traverse the membrane as a helical segment. Residue histidine 198 participates in chlorophyll a binding. Residues 208–228 (AALLCAIHGATVENTLFEDGD) traverse the membrane as a helical segment. A plastoquinone-binding residues include histidine 215 and phenylalanine 262. Histidine 215 is a binding site for Fe cation. Histidine 269 contacts Fe cation. A helical membrane pass occupies residues 279 to 295 (GLWMSAIGVVGLALNLR).

The protein belongs to the reaction center PufL/M/PsbA/D family. PSII is composed of 1 copy each of membrane proteins PsbA, PsbB, PsbC, PsbD, PsbE, PsbF, PsbH, PsbI, PsbJ, PsbK, PsbL, PsbM, PsbT, PsbX, PsbY, PsbZ, Psb30/Ycf12, at least 3 peripheral proteins of the oxygen-evolving complex and a large number of cofactors. It forms dimeric complexes. The D1/D2 heterodimer binds P680, chlorophylls that are the primary electron donor of PSII, and subsequent electron acceptors. It shares a non-heme iron and each subunit binds pheophytin, quinone, additional chlorophylls, carotenoids and lipids. There is also a Cl(-1) ion associated with D1 and D2, which is required for oxygen evolution. The PSII complex binds additional chlorophylls, carotenoids and specific lipids. serves as cofactor.

It localises to the plastid. Its subcellular location is the chloroplast thylakoid membrane. The catalysed reaction is 2 a plastoquinone + 4 hnu + 2 H2O = 2 a plastoquinol + O2. In terms of biological role, photosystem II (PSII) is a light-driven water:plastoquinone oxidoreductase that uses light energy to abstract electrons from H(2)O, generating O(2) and a proton gradient subsequently used for ATP formation. It consists of a core antenna complex that captures photons, and an electron transfer chain that converts photonic excitation into a charge separation. The D1/D2 (PsbA/PsbD) reaction center heterodimer binds P680, the primary electron donor of PSII as well as several subsequent electron acceptors. D2 is needed for assembly of a stable PSII complex. The sequence is that of Photosystem II D2 protein from Cryptomeria japonica (Japanese cedar).